A 159-amino-acid polypeptide reads, in one-letter code: Transcriptional repressor NrdR (159 aa).

The tract at residues 1–21 is disordered; that stretch reads MRCPKCQHNKSNVIDSRQAED. A zinc finger spans residues 3-34; the sequence is CPKCQHNKSNVIDSRQAEDGNTIRRRRECDAC. The ATP-cone domain maps to 49–139; the sequence is LLVVKKDGTR…VYRSFKDVDE (91 aa).

The protein belongs to the NrdR family. It depends on Zn(2+) as a cofactor.

Negatively regulates transcription of bacterial ribonucleotide reductase nrd genes and operons by binding to NrdR-boxes. The protein is Transcriptional repressor NrdR of Streptococcus thermophilus (strain CNRZ 1066).